Reading from the N-terminus, the 455-residue chain is Phosphoglucosamine mutase (455 aa).

Ser-102 (phosphoserine intermediate) is an active-site residue. Ser-102, Asp-241, Asp-243, and Asp-245 together coordinate Mg(2+). Ser-102 is modified (phosphoserine).

It belongs to the phosphohexose mutase family. Requires Mg(2+) as cofactor. In terms of processing, activated by phosphorylation.

It catalyses the reaction alpha-D-glucosamine 1-phosphate = D-glucosamine 6-phosphate. Functionally, catalyzes the conversion of glucosamine-6-phosphate to glucosamine-1-phosphate. In Legionella pneumophila (strain Paris), this protein is Phosphoglucosamine mutase.